Reading from the N-terminus, the 509-residue chain is Probable cytochrome P450 519B1 (509 aa).

Residues 1 to 21 (MNLINLILYFILFWIVFDFIR) traverse the membrane as a helical segment. Cysteine 456 contacts heme.

It belongs to the cytochrome P450 family. Heme is required as a cofactor.

Its subcellular location is the membrane. In Dictyostelium discoideum (Social amoeba), this protein is Probable cytochrome P450 519B1 (cyp519B1).